The following is a 1035-amino-acid chain: Eukaryotic translation initiation factor 3 subunit A (1035 aa).

The stretch at L92 to A121 forms a coiled coil. One can recognise a PCI domain in the interval M339–F523. Residues E606–E910 adopt a coiled-coil conformation. 2 stretches are compositionally biased toward basic and acidic residues: residues T619–R632 and K809–L901. Disordered regions lie at residues T619–A649 and K809–Q1035. 2 stretches are compositionally biased toward low complexity: residues K943–A953 and P988–P1004.

This sequence belongs to the eIF-3 subunit A family. As to quaternary structure, component of the eukaryotic translation initiation factor 3 (eIF-3) complex.

The protein resides in the cytoplasm. Functionally, RNA-binding component of the eukaryotic translation initiation factor 3 (eIF-3) complex, which is involved in protein synthesis of a specialized repertoire of mRNAs and, together with other initiation factors, stimulates binding of mRNA and methionyl-tRNAi to the 40S ribosome. The eIF-3 complex specifically targets and initiates translation of a subset of mRNAs involved in cell proliferation. The chain is Eukaryotic translation initiation factor 3 subunit A (tif32) from Emericella nidulans (strain FGSC A4 / ATCC 38163 / CBS 112.46 / NRRL 194 / M139) (Aspergillus nidulans).